Reading from the N-terminus, the 355-residue chain is Biotin synthase (355 aa).

In terms of domain architecture, Radical SAM core spans 51 to 275 (NTVKVNYLVN…VCPDKEIRIA (225 aa)). Residues Cys66, Cys70, and Cys73 each contribute to the [4Fe-4S] cluster site. Residues Cys110, Cys143, Cys203, and Arg273 each contribute to the [2Fe-2S] cluster site.

This sequence belongs to the radical SAM superfamily. Biotin synthase family. As to quaternary structure, homodimer. It depends on [4Fe-4S] cluster as a cofactor. The cofactor is [2Fe-2S] cluster.

It catalyses the reaction (4R,5S)-dethiobiotin + (sulfur carrier)-SH + 2 reduced [2Fe-2S]-[ferredoxin] + 2 S-adenosyl-L-methionine = (sulfur carrier)-H + biotin + 2 5'-deoxyadenosine + 2 L-methionine + 2 oxidized [2Fe-2S]-[ferredoxin]. The protein operates within cofactor biosynthesis; biotin biosynthesis; biotin from 7,8-diaminononanoate: step 2/2. Functionally, catalyzes the conversion of dethiobiotin (DTB) to biotin by the insertion of a sulfur atom into dethiobiotin via a radical-based mechanism. The polypeptide is Biotin synthase (Saccharopolyspora erythraea (strain ATCC 11635 / DSM 40517 / JCM 4748 / NBRC 13426 / NCIMB 8594 / NRRL 2338)).